Reading from the N-terminus, the 4456-residue chain is MASKAEKKRKVAGRGGARAGRVVRAPQSTAGPGATEASLLPDGQEPEPESGKEDSVLGLQAFASWRLTPALHGEANTPPTLLHPQPLFHRRLTTLNLILSCSRAGTRDLALKPFFLSRTMLTGLADATWTGEHDMVLEHFVQDPAVPALTIFIDPVFGLKLELGMPVQTQNQIVYFIRQAPVPITPENFEETVQYGTVRGAYIPALLRLLSGVYVPQIFMNKSWPESIRNHFVSHLHRFLASLTDTRYKLEGHTVLYIPAEAVQMDPEVVVKDKELVQRLETSMIHWTRQIKEVLSAQESVETGENLGPLEEIEFWHNRCMDLSSISKQLVKKGVKHIESILFLAKSSYLTPFRKLAQQIQDGSRQAQSNLTFLSILREPYQELAFMKPKDISEKLPKLISLIRIIWVNSPHYNTRERLTALFRKVCECQYHFARWEDGKQGPLPCFFGAQGPQITRNLLEIEDIFHKNLQTLRAVRGGILDVKNTSWHEDYNKFRGGIKDLEVMTQNLITSAFELVRDVEHGVLLLDTFHRLATREAIMRTYEKKAVDLYMLFNSELALVNRELNKKWPYLEPYMTQYSGQAHWVRILRRRIDRVMNCLSGAHFLPHIGTGEESIHTYQQMAQAIDEMVRKTFQEWTATLDKDCIRRLDMSLLRISQEKVGMLDVNFDKTLLILFAEIDYWERLLFETPHYVMNVAERAEDLRILRENLLLVARDYNRIIAMLSPDEQALFKERIRFLDKKIHPGLKKLNWALKGASAFFITECRMHASKVQMIVNDFKASTLTIGWKAQEMSELLLVHITGKQVYRDLEFEEAQREHRMAAQQKLVKLHQDVVNIMTNSYEVFKNDGPEIQQQWLLYTIRLDHMMEDALRLNVKWSLLELSKAINGDGKTTPNPLFRVLVILQNDVRGGGSQVEFSPTLQTLASVVNDIGSHLFATISVFRHLPDILTKRKMNREPIYVLVERDEDIRKIQAQISSGMTNNASLLQNYLKTWDMYREIWEINKDSFIRRYQRLNPPVSSFDADIARYTEVANNVQKEETVLNIQFVMLDCSHLKFSLVQHCNEWQNKFTTLLKEMAAGRLADLHSYLKDNAEKISHPPQTLEELGVSLQLMDTLQHDLPNLETQIPPIHEQFTILEKYEVPVPDTVLEMLESLNGEWLTFQQILLDSEQMLKKHKEKFKTGLIHAADDFKKKAHNLLEDFEFKGPFTSTVGHTAALDQIAQMRAMLMAMRDEENNLRSNLGIFKIEQPVSKDLQILEKELDALQQVWEITRDWEESWNQWKMGCFQTLQTEAMESMAHGLFRRLTRLAKEYKDRNWEIIETTRSKIEQFKRTMPLISDLRNPALRERHWDQVKEEVQREFDQESESFTLEQIVKLGMDQHVEKIAEISASATKELAIEVGLQNIAKTWDSTQLDIVPYKDKGHHRLRGTEEVFQALEDNQVALSTMKASRFVKAFEKDVDHWERCLSLILEVIEMVLTVQRQWMYLENIFLGEDIRKQLPNESALFDQVNNNWKAIMDRMNKDNNALRSTHYPGLLETLIEMNAILEDIQKSLDMYLETKRHIFPRFYFLSNDDLLEILGQSRNPEAVQPHLKKCFDNIKLLKIQKVGGSSSKWEAVGMFSGDGEYIDFLHPVLLEGPVESWLGDVERAMRMTLRDLLRNCRVALKKFLNKRDKWVKDWAGQVVITASQIQWTADVTKCLMTAKERSDKKILKVSILNKYSEAIRGNLTKIMRLKIVALVTIEIHARDVLEKLYKSGLMDVSSFDWLSQLRFYWEKDVDDCIIRQTNTQFQYGYEYLGNSGRLVITPLTDRCYMTLTTALHLHRGGSPKGPAGTGKTETVKDLGKALGIYVIVVNCSEGLDYKSMGRMYSGLAQSGAWGCFDEFNRINIEVLSVVAQQILSILSALTANLTRFYFEGFEINLVWSCGIFITMNPGYAGRTELPENLKSMFRPIAMVVPDSTLIAEIILFGEGFGNCKILAKKVYTLYSLAVQQLSRQDHYDFGLRALTSLLRYAGKKRRLQPDLSDEEVLLLSMRDMNIAKLTSVDVPLFNAIVQDLFPNIELPVIDYGKLRDTIEQEIREMGLQITPFTLTKVLQLYETKNSRHSTMIVGGTGSSKTTSWKILQASLTSLCRAGEPNYNIVREFPLNPKALSLGELYGEYDLNTNEWTDGILSSVMRVACADEKPDEKWILFDGPVDTLWIESMNSVMDDNKVLTLINGERIAMPEQVSLLFEVENLAVASPATVSRCGMVYTDYVDLGWKPYVQSWLEKRPKTEVEPLQRMFEKFINKILSFKKDNCNELVPVPEYSGIISLCKLYTVLATPENGVNPADAENYSFMVEMTFVFSMIWSVCASVDEDGRKKIDSYLREIEGSFPNKDTVYEYYVNPKMRTWTSFEEKLPKSWRYPPNAPFYKIMVPTVDTVRYNYLVSTLVANQNPVLLVGPVGTGKTSIAQSVLQSLPSSQWSVLVVNMSAQTTSNNVQSIIESRVEKRTKGVYVPFGGKSMITFMDDLNMPAKDMFGSQPPLELIRLWIDYGFWYDRVKQSIKHIRDMFLMAAMGPPGGGRTVISPRLQSRFNIINMTFPTESQIIRIFGTMINQKLQDFEEEVKPIGNVVTEATLDVYNTVVQRFLPTPAKIHYLFNLRDISKVFQGMLRANKDFHDTKASITRLWIHECFRVFSDRLVDTADMEAFMGILSDKLGTFFDLTFHHLCPNKRPPIFGDFLKEPKVYEDLVDLTVLKTAMETALNEYNLSPSVVPMQLVLFREAIEHITRIVRVIGQPRGNMLLVGIGGSGRQSLARLASSICDYNTFQIEVTKHYRKQEFRDDIKRLYRQAGVELQTTSFLFVDTQIADESFLEDINNILSSGEVPNLYKSDEFEEIQNHIIDQARAEQIPESSDSLFAYLIERVRNNLHIVLCLSPVGDPFRNWIRQYPALVNCTTINWFSEWPREALLEVAEKYIIGVDLGTQENIHRKVAQIFVTMHWSVAQYSQKMLLELRRYNYVTPTNYLELVSGYKKLLGEKRQELLDQANKLRTGLFKIDETREKVEVMSLELEDAKKKVAEFQKQCEEYLVIIVQQKREADEQQKAVTANSEKIAIEEVKCQALADNAQKDLEEALPALEEAMRALESLNKKDIGEIKSYGRPPAQVEIVMQAVMILRGNEPTWAEAKRQLGEQNFIKSLINFDKDNISDKVLKKIGAYCAQPDFQPDIIGRVSLAAKSLCMWVRAMELYGRLYRVVEPKRIRMNAAMAQLQEKQAALAEAQEKLREVAEKLEMLKKQYDEKLAQKEELRKKSEEMELKLERAGMLVSGLAGEKARWEETVQGLEEDLGYLVGDCLIAAAFLSYMGPFLTNYRDEIINQIWIRKIRELQVPCSPRFAIDNFLTNPTKVRDWNIQGLPSDAFSTENGIIVTRGNRWALMIDPQGQALKWIKNMEGNQGLKIIDLQMHDYLRVLEHAIQFGFPVLLQNVQEYLDPTLNPVLNKSVARIGGRMLIRIGDKEVEYNPNFRFYLTTKLSNPHYNPETSAKTTIVNFAVKEQGLEAQLLGIVVRKERPELEEQKDSLVINIAAGKRKLKELEDEILRLLNEATGSLLDDVQLVNTLQTSKITATEVTEQLETSETTEINIDLAREAYRPCAQRASVLFFVLNDMGRIDPMYQFSLDAYIGLFILSIDKSHRSNKLEDRIEYLNDYHTYAVYRYTCRTLFERHKLLFSFHMCAKILETSGKLNMDEYNFFLRGGVVLDREGQMDNPCTSWLADAYWDNITELDKLTNFHGLMNSFEQYPRDWHLWYTNSSPEKAMLPGEWENACNEMQRMLIVRSLRQDRVAFCVTSFIVSNLGSRFIEPPVLNMKSVMEDSTPRSPLVFILSPGVDPTSALLQLAEHTGMAHRFHALSLGQGQAPIAARLLREGVNQGHWVFLANCHLSLSWMPNLDKLVEQLQVEDPHPSFRLWLSSSPHPDFPISILQASIKMTTEPPKGLKANMTRLYQLMTEAQFTHCSKPAKYKKLLFALCFFHSILLERKKFLQLGWNIIYGFNDSDFEVSENLLSLYLDEYEETPWDALKYLIAGVNYGGHVTDDWDRRLLTTYINDYFCDLSLTTPFYRLSVLDTYYIPKDGSLASYKEYISMLPSMDPPEAFGQHPNADVASQITEARTLFETLLSLQPQITPTRVGGQSREEKVLELAADVKQKIPEMIDYEGTRKLLALDPSPLNVVLLQEIQRYNKLMKTILFSLTDLEKGIQGLIVMSTSLEEIFNCIFDAHVPPLWGKVYPSQKPLASWTRDLAVRVEQFETWASRARPPVLFWLSGFTFPTGFLTAVLQSAARQNNISVDSLSWEFIVSTVDDSNLVYPPKDGVWVRGLYLEGAGWDRKNSCLVEAEPMQLVCLMPTIHFRPAESRKKSAKGMYSCPCYYYPNRAGSTDRASFVIGIDLRSGSMTSDHWIKRGTALLMSLDS.

Residues 1-12 (MASKAEKKRKVA) show a composition bias toward basic residues. The disordered stretch occupies residues 1-55 (MASKAEKKRKVAGRGGARAGRVVRAPQSTAGPGATEASLLPDGQEPEPESGKEDS). The interval 1 to 1795 (MASKAEKKRK…RQTNTQFQYG (1795 aa)) is stem. Positions 1218-1274 (LDQIAQMRAMLMAMRDEENNLRSNLGIFKIEQPVSKDLQILEKELDALQQVWEITRD) form a coiled coil. A TPR 1 repeat occupies 1439–1474 (EDNQVALSTMKASRFVKAFEKDVDHWERCLSLILEV). 4 AAA regions span residues 1794-2015 (YGYE…LLRY), 2075-2302 (DTIE…DNCN), 2407-2654 (RYPP…VFQG), and 2751-3003 (EYNL…LRRY). Residues 1832 to 1839 (GPAGTGKT), 2113 to 2120 (GGTGSSKT), and 2445 to 2452 (GPVGTGKT) contribute to the ATP site. Residues 2750 to 2783 (NEYNLSPSVVPMQLVLFREAIEHITRIVRVIGQP) form a TPR 2 repeat. 2791-2798 (GIGGSGRQ) is a binding site for ATP. Residues 3018 to 3301 (YKKLLGEKRQ…EELRKKSEEM (284 aa)) form a stalk region. A coiled-coil region spans residues 3041–3078 (FKIDETREKVEVMSLELEDAKKKVAEFQKQCEEYLVII). The TPR 3 repeat unit spans residues 3101 to 3134 (IEEVKCQALADNAQKDLEEALPALEEAMRALESL). Coiled coils occupy residues 3245–3333 (KRIR…EEDL) and 3552–3596 (VRKE…GSLL). AAA stretches follow at residues 3387–3617 (LTNP…EVTE) and 3833–4052 (VTSF…LLSL). TPR repeat units follow at residues 4101–4134 (TTPFYRLSVLDTYYIPKDGSLASYKEYISMLPSM) and 4135–4169 (DPPEAFGQHPNADVASQITEARTLFETLLSLQPQI).

This sequence belongs to the dynein heavy chain family. In terms of assembly, part of the axonemal inner dynein arm complex that consists of at least two heavy chains and a number of intermediate and light chains. Interacts with DNAI4.

Its subcellular location is the cytoplasm. The protein localises to the cytoskeleton. It is found in the cilium axoneme. The protein resides in the flagellum axoneme. Its function is as follows. As part of the axonemal inner dynein arm complex plays a central role in ciliary beat. Expressed in sperm flagellum, it is required for sperm motility. Dyneins are microtubule-based molecular motors possessing ATPase activities that can convert the chemical energy of ATP into relative sliding between adjacent microtubule doublets to generate ciliary bending. In Mus musculus (Mouse), this protein is Dynein axonemal heavy chain 2.